A 943-amino-acid polypeptide reads, in one-letter code: Glutamate receptor ionotropic, NMDA 1 (943 aa).

The first 20 residues, 1 to 20, serve as a signal peptide directing secretion; the sequence is MSTMRLLTLALLFSCSFARA. Residues 21 to 580 are Extracellular-facing; it reads ACDPKIVNIG…TLDSFMQPFQ (560 aa). Residues Asn61, Asn224, Asn260, Asn297, Asn321, Asn371, Asn389, Asn461, Asn492, and Asn512 are each glycosylated (N-linked (GlcNAc...) asparagine). A disulfide bond links Cys79 and Cys329. Intrachain disulfides connect Cys441/Cys475 and Cys457/Cys476. The glycine site is built by Pro537, Thr539, and Arg544. Residues 581 to 601 traverse the membrane as a helical segment; sequence STLWLLVGLSVHVVAVMLYLL. The Cytoplasmic portion of the chain corresponds to 602–623; sequence DRFSPFGRFKVNSEEEEEDALT. The discontinuously helical intramembrane region spans 624–645; it reads LSSAMWFSWGVLLNSGIGEGAP. The tract at residues 624–645 is pore-forming; sequence LSSAMWFSWGVLLNSGIGEGAP. Residues 646-651 are Cytoplasmic-facing; that stretch reads RSFSAR. Residues 652–668 form a helical membrane-spanning segment; it reads ILGMVWAGFAMIIVASY. Over 669-833 the chain is Extracellular; sequence TANLAAFLVL…NAPATLTFEN (165 aa). Asn695 carries an N-linked (GlcNAc...) asparagine glycan. The glycine site is built by Ser709 and Asp753. Cys765 and Cys819 are disulfide-bonded. The N-linked (GlcNAc...) asparagine glycan is linked to Asn792. A helical membrane pass occupies residues 834 to 854; that stretch reads MAGVFMLVAGGIVAGIFLIFI. Topologically, residues 855–943 are cytoplasmic; that stretch reads EIAYKRHKDA…LSDPSVSTVV (89 aa). Ser910, Ser911, Ser917, and Ser918 each carry phosphoserine.

It belongs to the glutamate-gated ion channel (TC 1.A.10.1) family. NR1/GRIN1 subfamily. As to quaternary structure, heterotetramer; the NMDAR subunits are modular and harbor tiered domains that function in concert to regulate opening and closing of the cation-selective ion channel pore. Forms heterotetrameric channels composed of two GluN1/zeta subunits (GRIN1), and two identical GluN2/epsilon subunits (GRIN2A, GRIN2B, GRIN2C or GRIN2D) or GluN3 subunits (GRIN3A or GRIN3B) (in vitro). Can also form heterotetrameric channels that contain at least two GluN1 subunits and at least two different GluN2 subunits (or a combination of one GluN2 and one GluN3 subunits) (in vitro). In vivo, the subunit composition may vary in function of the expression levels of the different subunits. Found in a complex with GRIN2A or GRIN2B, GRIN3A and PPP2CB. Found in a complex with GRIN2A or GRIN2B and GRIN3B. Interacts with SNX27 (via PDZ domain); the interaction is required for recycling to the plasma membrane when endocytosed and prevent degradation in lysosomes. Interacts with DLG4 and MPDZ. Interacts with LRFN1 and LRFN2. Interacts with MYZAP. Found in a complex with DLG4 and PRR7. Found in a complex with GRIN2B and PRR7. Interacts with PRR7; the interaction is reduced following NMDA receptor activity. Post-translationally, NMDA is probably regulated by C-terminal phosphorylation of an isoform of GRIN1 by PKC. Dephosphorylated on Ser-897 probably by protein phosphatase 2A (PPP2CB). Its phosphorylated state is influenced by the formation of the NMDAR-PPP2CB complex and the NMDAR channel activity.

The protein resides in the cell membrane. Its subcellular location is the postsynaptic cell membrane. The protein localises to the postsynaptic density membrane. It is found in the synaptic cell membrane. It catalyses the reaction Ca(2+)(in) = Ca(2+)(out). The catalysed reaction is Na(+)(in) = Na(+)(out). It carries out the reaction K(+)(in) = K(+)(out). Its function is as follows. Component of N-methyl-D-aspartate (NMDA) receptors (NMDARs) that function as heterotetrameric, ligand-gated cation channels with high calcium permeability and voltage-dependent block by Mg(2+). NMDARs participate in synaptic plasticity for learning and memory formation by contributing to the long-term potentiation (LTP). Channel activation requires binding of the neurotransmitter L-glutamate to the GluN2 subunit, glycine or D-serine binding to the GluN1 subunit, plus membrane depolarization to eliminate channel inhibition by Mg(2+). NMDARs mediate simultaneously the potasium efflux and the influx of calcium and sodium. Each GluN2 or GluN3 subunit confers differential attributes to channel properties, including activation, deactivation and desensitization kinetics, pH sensitivity, Ca2(+) permeability, and binding to allosteric modulators. The GluN3 subunits confer distinctive ion channel activation mechanism, which relies exclusively on glycine and does not involve glutamate. The sequence is that of Glutamate receptor ionotropic, NMDA 1 from Canis lupus familiaris (Dog).